Reading from the N-terminus, the 767-residue chain is ATP-dependent rRNA helicase SPB4 (767 aa).

The Q motif signature appears at 28-56 (WTKLTPPLTPWVVSLLSDLGFGQMTPVQA). Positions 59-291 (IPLFVSHKDV…RIGLRNPVRV (233 aa)) constitute a Helicase ATP-binding domain. 72–79 (AVTGSGKT) provides a ligand contact to ATP. The disordered stretch occupies residues 132–176 (HVQAQQQQDQDEQDEQDEQEAQSDSDTDPDASTALNNKRKSSNHL). Acidic residues predominate over residues 140–160 (DQDEQDEQDEQEAQSDSDTDP). Residues 239–242 (DEAD) carry the DEAD box motif. One can recognise a Helicase C-terminal domain in the interval 330–507 (QLARIVLFES…ILEPAEDDAS (178 aa)). A disordered region spans residues 609 to 767 (KLSGDQAKPP…NADAEPFFVI (159 aa)). 2 stretches are compositionally biased toward basic and acidic residues: residues 636–645 (CDSHDSDDAH) and 659–681 (LERE…ANRE). Positions 654-746 (KNKRKLEREK…RANSDNDDAM (93 aa)) form a coiled coil. Residues 690 to 700 (LKTQAAESSSN) show a composition bias toward polar residues. Residues 701-746 (AKHEPPQDDHDEHDWNDDYRKLQKDKRQQRQRNKADRANSDNDDAM) show a composition bias toward basic and acidic residues. Over residues 749–761 (NSDSDAAAANADA) the composition is skewed to low complexity.

It belongs to the DEAD box helicase family. DDX55/SPB4 subfamily. In terms of assembly, component of pre-60S ribosomal complexes.

It localises to the nucleus. Its subcellular location is the nucleolus. It catalyses the reaction ATP + H2O = ADP + phosphate + H(+). In terms of biological role, ATP-binding RNA helicase involved in the biogenesis of 60S ribosomal subunits. Binds 90S pre-ribosomal particles and dissociates from pre-60S ribosomal particles after processing of 27SB pre-rRNA. Required for the normal formation of 18S rRNA through the processing of pre-rRNAs at sites A0, A1 and A2, and the normal formation of 25S and 5.8S rRNAs through the processing of pre-rRNAs at sites C1 and C2. In Mycosarcoma maydis (Corn smut fungus), this protein is ATP-dependent rRNA helicase SPB4.